The sequence spans 325 residues: Ribosomal RNA small subunit methyltransferase H (325 aa).

S-adenosyl-L-methionine-binding positions include 32–34 (GGH), aspartate 52, phenylalanine 79, aspartate 100, and glutamine 107.

Belongs to the methyltransferase superfamily. RsmH family.

It is found in the cytoplasm. The catalysed reaction is cytidine(1402) in 16S rRNA + S-adenosyl-L-methionine = N(4)-methylcytidine(1402) in 16S rRNA + S-adenosyl-L-homocysteine + H(+). Its function is as follows. Specifically methylates the N4 position of cytidine in position 1402 (C1402) of 16S rRNA. The sequence is that of Ribosomal RNA small subunit methyltransferase H from Oceanobacillus iheyensis (strain DSM 14371 / CIP 107618 / JCM 11309 / KCTC 3954 / HTE831).